Reading from the N-terminus, the 37-residue chain is GFGGGRGGFGGGRGGFGGGGIGGGGFGGGYGGGKIKG.

Residues 16-37 (FGGGGIGGGGFGGGYGGGKIKG) form a disordered region. K36 is subject to Lysine amide.

In terms of tissue distribution, expressed in hemocytes (at protein level).

The protein localises to the secreted. Its function is as follows. Antimicrobial protein with activity against Gram-positive and Gram-negative bacteria, filamentous fungus, and yeast. Was tested against Micrococcus luteus A270 (MIC=0.5-1 uM), Echerichia coli SBS 363 (MIC=9-16 uM), Pseudomonas aeruginosa (MIC=0.01-0.3 uM), Aspergillus niger (MIC=3-6 uM), and Candida albicans MDM8 (MIC=1.5-3 uM). Has no hemolytic activity against human erythrocytes. This is Serrulin from Tityus serrulatus (Brazilian scorpion).